The chain runs to 674 residues: Translation initiation factor IF-2 (674 aa).

The 171-residue stretch at 174–344 folds into the tr-type G domain; sequence IRPPVVTVMG…LLVAELREIK (171 aa). A G1 region spans residues 183–190; sequence GHVDHGKT. Residue 183–190 participates in GTP binding; sequence GHVDHGKT. The G2 stretch occupies residues 208 to 212; that stretch reads GITQS. Residues 229-232 are G3; the sequence is DTPG. GTP is bound by residues 229–233 and 283–286; these read DTPGH and NKID. The interval 283-286 is G4; sequence NKID. Residues 320 to 322 are G5; sequence SAR.

This sequence belongs to the TRAFAC class translation factor GTPase superfamily. Classic translation factor GTPase family. IF-2 subfamily.

The protein resides in the cytoplasm. Functionally, one of the essential components for the initiation of protein synthesis. Protects formylmethionyl-tRNA from spontaneous hydrolysis and promotes its binding to the 30S ribosomal subunits. Also involved in the hydrolysis of GTP during the formation of the 70S ribosomal complex. The chain is Translation initiation factor IF-2 from Pseudothermotoga lettingae (strain ATCC BAA-301 / DSM 14385 / NBRC 107922 / TMO) (Thermotoga lettingae).